The primary structure comprises 349 residues: Anthranilate phosphoribosyltransferase (349 aa).

Residues G82, 85 to 86 (GD), T90, 92 to 95 (NVST), 110 to 118 (KHGNRSVSS), and G122 contribute to the 5-phospho-alpha-D-ribose 1-diphosphate site. G82 is a binding site for anthranilate. S94 serves as a coordination point for Mg(2+). N113 provides a ligand contact to anthranilate. Anthranilate is bound at residue R168. Mg(2+)-binding residues include D232 and E233.

This sequence belongs to the anthranilate phosphoribosyltransferase family. Homodimer. Requires Mg(2+) as cofactor.

It carries out the reaction N-(5-phospho-beta-D-ribosyl)anthranilate + diphosphate = 5-phospho-alpha-D-ribose 1-diphosphate + anthranilate. Its pathway is amino-acid biosynthesis; L-tryptophan biosynthesis; L-tryptophan from chorismate: step 2/5. Its function is as follows. Catalyzes the transfer of the phosphoribosyl group of 5-phosphorylribose-1-pyrophosphate (PRPP) to anthranilate to yield N-(5'-phosphoribosyl)-anthranilate (PRA). The protein is Anthranilate phosphoribosyltransferase of Methanosphaera stadtmanae (strain ATCC 43021 / DSM 3091 / JCM 11832 / MCB-3).